Consider the following 946-residue polypeptide: Probable leucine-rich repeat receptor-like protein kinase At5g49770 (946 aa).

An N-terminal signal peptide occupies residues methionine 1–alanine 25. Over phenylalanine 26–lysine 561 the chain is Extracellular. LRR repeat units follow at residues aspartate 67–leucine 91, serine 92–leucine 116, lysine 118–leucine 140, glutamate 141–leucine 164, lysine 166–glycine 191, leucine 195–serine 219, methionine 221–valine 244, glutamine 245–leucine 268, threonine 269–serine 293, tyrosine 295–proline 314, leucine 316–proline 340, glutamine 342–lysine 365, leucine 367–proline 387, and asparagine 389–glycine 407. 3 N-linked (GlcNAc...) asparagine glycosylation sites follow: asparagine 246, asparagine 267, and asparagine 287. 2 N-linked (GlcNAc...) asparagine glycosylation sites follow: asparagine 354 and asparagine 362. Residues asparagine 415, asparagine 460, asparagine 489, and asparagine 514 are each glycosylated (N-linked (GlcNAc...) asparagine). Residues valine 562–isoleucine 582 form a helical membrane-spanning segment. At tyrosine 583 to proline 946 the chain is on the cytoplasmic side. A Protein kinase domain is found at phenylalanine 634–leucine 908. Residues valine 640–valine 648 and lysine 662 each bind ATP. Aspartate 758 (proton acceptor) is an active-site residue. The segment at serine 919–proline 946 is disordered.

The protein belongs to the protein kinase superfamily. Ser/Thr protein kinase family.

It localises to the membrane. It catalyses the reaction L-seryl-[protein] + ATP = O-phospho-L-seryl-[protein] + ADP + H(+). The catalysed reaction is L-threonyl-[protein] + ATP = O-phospho-L-threonyl-[protein] + ADP + H(+). This is Probable leucine-rich repeat receptor-like protein kinase At5g49770 from Arabidopsis thaliana (Mouse-ear cress).